The chain runs to 825 residues: Probable inorganic carbon transporter subunit DabA (825 aa).

Residues cysteine 334, aspartate 336, histidine 521, and cysteine 536 each contribute to the Zn(2+) site.

The protein belongs to the inorganic carbon transporter (TC 9.A.2) DabA family. As to quaternary structure, forms a complex with DabB. The cofactor is Zn(2+).

It is found in the cell inner membrane. Functionally, part of an energy-coupled inorganic carbon pump. This is Probable inorganic carbon transporter subunit DabA from Acidithiobacillus ferrooxidans (strain ATCC 23270 / DSM 14882 / CIP 104768 / NCIMB 8455) (Ferrobacillus ferrooxidans (strain ATCC 23270)).